The chain runs to 290 residues: 4-diphosphocytidyl-2-C-methyl-D-erythritol kinase (290 aa).

The active site involves lysine 10. 95–105 (PVAAGLAGGSS) serves as a coordination point for ATP. Aspartate 137 is an active-site residue.

The protein belongs to the GHMP kinase family. IspE subfamily.

The enzyme catalyses 4-CDP-2-C-methyl-D-erythritol + ATP = 4-CDP-2-C-methyl-D-erythritol 2-phosphate + ADP + H(+). It participates in isoprenoid biosynthesis; isopentenyl diphosphate biosynthesis via DXP pathway; isopentenyl diphosphate from 1-deoxy-D-xylulose 5-phosphate: step 3/6. In terms of biological role, catalyzes the phosphorylation of the position 2 hydroxy group of 4-diphosphocytidyl-2C-methyl-D-erythritol. The chain is 4-diphosphocytidyl-2-C-methyl-D-erythritol kinase from Geobacillus thermodenitrificans (strain NG80-2).